The sequence spans 680 residues: Extracellular matrix protein 2 (680 aa).

A signal peptide spans 1–20 (MKFSSLYCFLLLLIFQTDFG). The 58-residue stretch at 100-157 (GHCLANGMIMYNKAVWSPEPCTTCLCLNGKVLCDETKCHPQMCPQTIIPEGECCPVCS) folds into the VWFC domain. Over residues 189–198 (QLEEDEEEVK) the composition is skewed to acidic residues. The disordered stretch occupies residues 189–293 (QLEEDEEEVK…RLPIPATPRG (105 aa)). Basic and acidic residues predominate over residues 223–238 (QSREGKAQRPEEEGRQ). Positions 249 to 272 (NEEDDDEEEEDDDDEEEDDDDEDE) are enriched in acidic residues. The Cell attachment site signature appears at 275 to 277 (RGD). One can recognise an LRRNT domain in the interval 288-325 (PATPRGIPSLPSMCSLSYKTISCISADLTQIPPLTAPE). LRR repeat units lie at residues 349–369 (NLERLDLSKNNITSSGIGPKA), 375–396 (NLMRLNMDGNNLVTIPSELPST), 397–417 (LEELKINENKLQVIDEESLSD), 420–440 (QLVTLELEGNNLSETNVNSLA), 446–466 (SLSYLRLGRNKFRIIPQGLPA), 467–488 (SIEELYLENNQIEEITEISFNH), 491–511 (KINVIGLRYNKIEENRIAPLA), 517–538 (NLESIDLSYNKLYHVPSYLPKS), 539–559 (LVHLVLIGNQIERIPGYVFGH), 563–583 (GLEYLYLSFNKLVDDGIDRVS), 590–611 (SLRELFLDHNELKSIPPGVQEM), 613–634 (ALHFLRLNNNKIRNILPEQICN), and 642–665 (NLQHLHLENNYIKTREIPSYAFSC). A glycan (N-linked (GlcNAc...) asparagine) is linked at asparagine 359. The N-linked (GlcNAc...) asparagine glycan is linked to asparagine 430. Asparagine 487 carries an N-linked (GlcNAc...) asparagine glycan.

Belongs to the small leucine-rich proteoglycan (SLRP) family. SLRP class I subfamily. Interacts with numerous extracellular matrix proteins. Interacts with MSL1 and RASSF1.

It localises to the secreted. Its subcellular location is the extracellular space. The protein resides in the extracellular matrix. Promotes matrix assembly and cell adhesiveness. This Bos taurus (Bovine) protein is Extracellular matrix protein 2 (ECM2).